Here is a 458-residue protein sequence, read N- to C-terminus: tRNA modification GTPase MnmE (458 aa).

The (6S)-5-formyl-5,6,7,8-tetrahydrofolate site is built by arginine 26, glutamate 88, and arginine 127. Residues 224–378 (GLSTAIIGRP…IEDRINQLFF (155 aa)) enclose the TrmE-type G domain. Residue asparagine 234 participates in K(+) binding. GTP contacts are provided by residues 234–239 (NVGKSS), 253–259 (TDIAGTT), and 278–281 (DTAG). Serine 238 contributes to the Mg(2+) binding site. Threonine 253, isoleucine 255, and threonine 258 together coordinate K(+). A Mg(2+)-binding site is contributed by threonine 259. Lysine 458 serves as a coordination point for (6S)-5-formyl-5,6,7,8-tetrahydrofolate.

Belongs to the TRAFAC class TrmE-Era-EngA-EngB-Septin-like GTPase superfamily. TrmE GTPase family. As to quaternary structure, homodimer. Heterotetramer of two MnmE and two MnmG subunits. Requires K(+) as cofactor.

Its subcellular location is the cytoplasm. Functionally, exhibits a very high intrinsic GTPase hydrolysis rate. Involved in the addition of a carboxymethylaminomethyl (cmnm) group at the wobble position (U34) of certain tRNAs, forming tRNA-cmnm(5)s(2)U34. In Streptococcus pyogenes serotype M1, this protein is tRNA modification GTPase MnmE.